The primary structure comprises 354 residues: Protein RecA (354 aa).

An ATP-binding site is contributed by 67 to 74 (GPESSGKT).

It belongs to the RecA family.

The protein localises to the cytoplasm. Can catalyze the hydrolysis of ATP in the presence of single-stranded DNA, the ATP-dependent uptake of single-stranded DNA by duplex DNA, and the ATP-dependent hybridization of homologous single-stranded DNAs. It interacts with LexA causing its activation and leading to its autocatalytic cleavage. This Haemophilus influenzae (strain 86-028NP) protein is Protein RecA.